The sequence spans 347 residues: 3-isopropylmalate dehydrogenase (347 aa).

Glycine 76 to glutamate 87 is a binding site for NAD(+). Residues arginine 94, arginine 104, arginine 132, and aspartate 217 each coordinate substrate. Residues aspartate 217, aspartate 241, and aspartate 245 each coordinate Mg(2+). Glycine 275–asparagine 287 serves as a coordination point for NAD(+).

Belongs to the isocitrate and isopropylmalate dehydrogenases family. LeuB type 1 subfamily. In terms of assembly, homodimer. Requires Mg(2+) as cofactor. It depends on Mn(2+) as a cofactor.

The protein localises to the cytoplasm. It catalyses the reaction (2R,3S)-3-isopropylmalate + NAD(+) = 4-methyl-2-oxopentanoate + CO2 + NADH. The protein operates within amino-acid biosynthesis; L-leucine biosynthesis; L-leucine from 3-methyl-2-oxobutanoate: step 3/4. Functionally, catalyzes the oxidation of 3-carboxy-2-hydroxy-4-methylpentanoate (3-isopropylmalate) to 3-carboxy-4-methyl-2-oxopentanoate. The product decarboxylates to 4-methyl-2 oxopentanoate. The polypeptide is 3-isopropylmalate dehydrogenase (Staphylococcus epidermidis (strain ATCC 35984 / DSM 28319 / BCRC 17069 / CCUG 31568 / BM 3577 / RP62A)).